The following is a 350-amino-acid chain: Phenylalanine--tRNA ligase alpha subunit (350 aa).

Glutamate 262 serves as a coordination point for Mg(2+).

The protein belongs to the class-II aminoacyl-tRNA synthetase family. Phe-tRNA synthetase alpha subunit type 1 subfamily. As to quaternary structure, tetramer of two alpha and two beta subunits. Mg(2+) is required as a cofactor.

It localises to the cytoplasm. The enzyme catalyses tRNA(Phe) + L-phenylalanine + ATP = L-phenylalanyl-tRNA(Phe) + AMP + diphosphate + H(+). The sequence is that of Phenylalanine--tRNA ligase alpha subunit from Thermus thermophilus (strain ATCC BAA-163 / DSM 7039 / HB27).